Reading from the N-terminus, the 620-residue chain is 1-deoxy-D-xylulose-5-phosphate synthase (620 aa).

Thiamine diphosphate contacts are provided by residues His-80 and 121–123 (GHS). Mg(2+) is bound at residue Asp-152. Residues 153 to 154 (GA), Asn-181, Tyr-288, and Glu-370 contribute to the thiamine diphosphate site. Position 181 (Asn-181) interacts with Mg(2+).

This sequence belongs to the transketolase family. DXPS subfamily. In terms of assembly, homodimer. It depends on Mg(2+) as a cofactor. Thiamine diphosphate serves as cofactor.

It catalyses the reaction D-glyceraldehyde 3-phosphate + pyruvate + H(+) = 1-deoxy-D-xylulose 5-phosphate + CO2. It participates in metabolic intermediate biosynthesis; 1-deoxy-D-xylulose 5-phosphate biosynthesis; 1-deoxy-D-xylulose 5-phosphate from D-glyceraldehyde 3-phosphate and pyruvate: step 1/1. In terms of biological role, catalyzes the acyloin condensation reaction between C atoms 2 and 3 of pyruvate and glyceraldehyde 3-phosphate to yield 1-deoxy-D-xylulose-5-phosphate (DXP). The chain is 1-deoxy-D-xylulose-5-phosphate synthase from Escherichia coli (strain 55989 / EAEC).